The primary structure comprises 2036 residues: Ral GTPase-activating protein subunit alpha-1 (2036 aa).

Disordered stretches follow at residues 343–384 (LVSR…SSLC) and 476–497 (EEGEKREEENGTNTADHVRNSS). Residues 345 to 365 (SREESKNDNADKTDRTTEPEQ) are compositionally biased toward basic and acidic residues. Polar residues-rich tracts occupy residues 366–384 (SHSNTSTLTEREPSSSSLC) and 486–497 (GTNTADHVRNSS). Residues Ser711 and Ser721 each carry the phosphoserine modification. The interval 715–753 (SFSRGWSRDQPGQAPMRQRSATTTGSPGTEKARSIVRQK) is disordered. Residue Thr754 is modified to Phosphothreonine. The residue at position 773 (Ser773) is a Phosphoserine. Position 778 is a phosphothreonine (Thr778). Ser797, Ser860, Ser861, and Ser864 each carry phosphoserine. 2 disordered regions span residues 849–910 (SGNA…SDSH) and 982–1009 (TITGSESASPVHSPLGSRSQTPSPSTLN). Over residues 850-863 (GNASTMTRRGSSPG) the composition is skewed to polar residues. Low complexity predominate over residues 895 to 910 (SPASAGSSDLISSDSH). Residues 983–1009 (ITGSESASPVHSPLGSRSQTPSPSTLN) are compositionally biased toward polar residues. Residues Ser986, Ser990, Ser994, and Ser1000 each carry the phosphoserine modification. The residue at position 1002 (Thr1002) is a Phosphothreonine. Phosphoserine occurs at positions 1004 and 1478. The interval 1327–2035 (FTNKTVAHVA…PYHHLPSDAD (709 aa)) is minimal domain that binds to TCF3/E12. Residues 1716–1744 (KQENDVINAILKQHTEEKEFVEKHFNDLN) adopt a coiled-coil conformation. The Rap-GAP domain maps to 1796–2004 (LRNLDSRQCR…EERARYLQTI (209 aa)).

In terms of assembly, component of the heterodimeric RalGAP1 complex with RALGAPB. Heterodimerization is required for activity. Interacts with the HLH region of TCF3/isoform E12. Widely expressed.

Its subcellular location is the cytoplasm. The protein localises to the nucleus. Catalytic subunit of the heterodimeric RalGAP1 complex which acts as a GTPase activator for the Ras-like small GTPases RALA and RALB. This Homo sapiens (Human) protein is Ral GTPase-activating protein subunit alpha-1 (RALGAPA1).